The primary structure comprises 195 residues: Pyridoxal 5'-phosphate synthase subunit PdxT (195 aa).

Position 46–48 (46–48 (GES)) interacts with L-glutamine. The Nucleophile role is filled by cysteine 78. L-glutamine contacts are provided by residues arginine 106 and 134-135 (IR). Residues histidine 170 and glutamate 172 each act as charge relay system in the active site.

This sequence belongs to the glutaminase PdxT/SNO family. In terms of assembly, in the presence of PdxS, forms a dodecamer of heterodimers. Only shows activity in the heterodimer.

The catalysed reaction is aldehydo-D-ribose 5-phosphate + D-glyceraldehyde 3-phosphate + L-glutamine = pyridoxal 5'-phosphate + L-glutamate + phosphate + 3 H2O + H(+). It catalyses the reaction L-glutamine + H2O = L-glutamate + NH4(+). It functions in the pathway cofactor biosynthesis; pyridoxal 5'-phosphate biosynthesis. Functionally, catalyzes the hydrolysis of glutamine to glutamate and ammonia as part of the biosynthesis of pyridoxal 5'-phosphate. The resulting ammonia molecule is channeled to the active site of PdxS. This chain is Pyridoxal 5'-phosphate synthase subunit PdxT, found in Pseudothermotoga lettingae (strain ATCC BAA-301 / DSM 14385 / NBRC 107922 / TMO) (Thermotoga lettingae).